We begin with the raw amino-acid sequence, 305 residues long: GTPase Era (305 aa).

Residues 11 to 181 (RSGFISFVGR…LDVITRLLPE (171 aa)) enclose the Era-type G domain. The segment at 19-26 (GRPNTGKS) is G1. 19-26 (GRPNTGKS) lines the GTP pocket. The interval 45–49 (ETTRH) is G2. The G3 stretch occupies residues 66-69 (DTPG). GTP-binding positions include 66–70 (DTPGL) and 130–133 (TKVD). A G4 region spans residues 130-133 (TKVD). Residues 160–162 (VSA) are G5. Residues 212-291 (LKDELPHSVA…YLDLRIKVLK (80 aa)) enclose the KH type-2 domain.

The protein belongs to the TRAFAC class TrmE-Era-EngA-EngB-Septin-like GTPase superfamily. Era GTPase family. In terms of assembly, monomer.

It is found in the cytoplasm. The protein resides in the cell membrane. Functionally, an essential GTPase that binds both GDP and GTP, with rapid nucleotide exchange. Plays a role in 16S rRNA processing and 30S ribosomal subunit biogenesis and possibly also in cell cycle regulation and energy metabolism. The chain is GTPase Era from Corynebacterium diphtheriae (strain ATCC 700971 / NCTC 13129 / Biotype gravis).